The primary structure comprises 210 residues: Thiamine-phosphate synthase (210 aa).

4-amino-2-methyl-5-(diphosphooxymethyl)pyrimidine is bound by residues 39–43 (QLREK) and N71. Residues D72 and D91 each coordinate Mg(2+). S110 is a 4-amino-2-methyl-5-(diphosphooxymethyl)pyrimidine binding site. 134 to 136 (TPT) provides a ligand contact to 2-[(2R,5Z)-2-carboxy-4-methylthiazol-5(2H)-ylidene]ethyl phosphate. Residue K137 coordinates 4-amino-2-methyl-5-(diphosphooxymethyl)pyrimidine. G163 is a 2-[(2R,5Z)-2-carboxy-4-methylthiazol-5(2H)-ylidene]ethyl phosphate binding site.

Belongs to the thiamine-phosphate synthase family. Mg(2+) serves as cofactor.

It catalyses the reaction 2-[(2R,5Z)-2-carboxy-4-methylthiazol-5(2H)-ylidene]ethyl phosphate + 4-amino-2-methyl-5-(diphosphooxymethyl)pyrimidine + 2 H(+) = thiamine phosphate + CO2 + diphosphate. The catalysed reaction is 2-(2-carboxy-4-methylthiazol-5-yl)ethyl phosphate + 4-amino-2-methyl-5-(diphosphooxymethyl)pyrimidine + 2 H(+) = thiamine phosphate + CO2 + diphosphate. It carries out the reaction 4-methyl-5-(2-phosphooxyethyl)-thiazole + 4-amino-2-methyl-5-(diphosphooxymethyl)pyrimidine + H(+) = thiamine phosphate + diphosphate. The protein operates within cofactor biosynthesis; thiamine diphosphate biosynthesis; thiamine phosphate from 4-amino-2-methyl-5-diphosphomethylpyrimidine and 4-methyl-5-(2-phosphoethyl)-thiazole: step 1/1. Condenses 4-methyl-5-(beta-hydroxyethyl)thiazole monophosphate (THZ-P) and 2-methyl-4-amino-5-hydroxymethyl pyrimidine pyrophosphate (HMP-PP) to form thiamine monophosphate (TMP). This is Thiamine-phosphate synthase from Campylobacter jejuni (strain RM1221).